The following is a 148-amino-acid chain: L-alanine exporter AlaE (148 aa).

4 helical membrane passes run Phe-18–Met-38, Val-49–Ile-69, Leu-88–Ala-108, and Thr-115–Leu-135.

Belongs to the AlaE exporter family.

The protein resides in the cell inner membrane. In terms of biological role, exports L-alanine. The chain is L-alanine exporter AlaE from Yersinia enterocolitica subsp. palearctica serotype O:3 (strain DSM 13030 / CIP 106945 / Y11).